The primary structure comprises 356 residues: Arginine kinase Lit v 2.0101 (356 aa).

A Phosphagen kinase N-terminal domain is found at 9–91; the sequence is KLEAGFKKLE…FDPIIEDYHV (83 aa). An L-arginine-binding site is contributed by 64–68; the sequence is GVGIY. The Phosphagen kinase C-terminal domain maps to 119–356; sequence FVISTRVRCG…LELIKIEKEM (238 aa). ATP is bound by residues 122 to 126 and His185; that span reads STRVR. Glu225 is a binding site for L-arginine. Arg229 contributes to the ATP binding site. Cys271 serves as a coordination point for L-arginine. ATP contacts are provided by residues 280-284 and 309-314; these read RASVH and RGTRGE. Glu314 provides a ligand contact to L-arginine.

It belongs to the ATP:guanido phosphotransferase family. As to quaternary structure, monomer. As to expression, muscle (at protein level).

The catalysed reaction is L-arginine + ATP = N(omega)-phospho-L-arginine + ADP + H(+). It carries out the reaction dTDP + ATP = dTTP + ADP. Catalyzes the reversible transfer of high energy ATP gamma-phosphate group to L-arginine. Has nucleoside diphosphate kinase-like activity toward dTDP. Binds and phosphorylates dTDP using ATP as a phosphate donor. Does not phosphorylate dADP, dCDP, dGDP, dTMP or thymidine. This chain is Arginine kinase Lit v 2.0101, found in Penaeus vannamei (Whiteleg shrimp).